The following is an 844-amino-acid chain: Translation initiation factor IF-2 (844 aa).

The span at 1–11 (MTEDVKADVPK) shows a compositional bias: basic and acidic residues. Disordered regions lie at residues 1–35 (MTED…SKAV) and 79–248 (RLEA…KGAA). Residues 21-33 (TTVSGTTTSGKSK) show a composition bias toward low complexity. A compositionally biased stretch (basic and acidic residues) spans 79-161 (RLEAEKAATK…AAEEAKRYAE (83 aa)). Acidic residues predominate over residues 162–175 (ADDSDNESSSEDYS). Residues 200 to 210 (RGKNKVAKAKK) show a composition bias toward basic residues. A compositionally biased stretch (basic and acidic residues) spans 211-237 (GGRDDENSKNSKNERESNRKNQKDAKF). Residues 343–513 (TRAPVVTIMG…LLQSEVLELT (171 aa)) form the tr-type G domain. Residues 352–359 (GHVDHGKT) form a G1 region. 352–359 (GHVDHGKT) provides a ligand contact to GTP. Residues 377–381 (GITQH) are G2. Residues 399-402 (DTPG) form a G3 region. GTP-binding positions include 399–403 (DTPGH) and 453–456 (NKID). The tract at residues 453-456 (NKID) is G4. The interval 489-491 (SAK) is G5.

Belongs to the TRAFAC class translation factor GTPase superfamily. Classic translation factor GTPase family. IF-2 subfamily.

The protein localises to the cytoplasm. One of the essential components for the initiation of protein synthesis. Protects formylmethionyl-tRNA from spontaneous hydrolysis and promotes its binding to the 30S ribosomal subunits. Also involved in the hydrolysis of GTP during the formation of the 70S ribosomal complex. This Haemophilus influenzae (strain PittGG) protein is Translation initiation factor IF-2.